The chain runs to 94 residues: Pyrimidine/purine nucleoside phosphorylase 2 (94 aa).

Belongs to the nucleoside phosphorylase PpnP family.

The catalysed reaction is a purine D-ribonucleoside + phosphate = a purine nucleobase + alpha-D-ribose 1-phosphate. It carries out the reaction adenosine + phosphate = alpha-D-ribose 1-phosphate + adenine. The enzyme catalyses cytidine + phosphate = cytosine + alpha-D-ribose 1-phosphate. It catalyses the reaction guanosine + phosphate = alpha-D-ribose 1-phosphate + guanine. The catalysed reaction is inosine + phosphate = alpha-D-ribose 1-phosphate + hypoxanthine. It carries out the reaction thymidine + phosphate = 2-deoxy-alpha-D-ribose 1-phosphate + thymine. The enzyme catalyses uridine + phosphate = alpha-D-ribose 1-phosphate + uracil. It catalyses the reaction xanthosine + phosphate = alpha-D-ribose 1-phosphate + xanthine. Functionally, catalyzes the phosphorolysis of diverse nucleosides, yielding D-ribose 1-phosphate and the respective free bases. Can use uridine, adenosine, guanosine, cytidine, thymidine, inosine and xanthosine as substrates. Also catalyzes the reverse reactions. The chain is Pyrimidine/purine nucleoside phosphorylase 2 from Psychrobacter cryohalolentis (strain ATCC BAA-1226 / DSM 17306 / VKM B-2378 / K5).